We begin with the raw amino-acid sequence, 580 residues long: Glypican-3 (580 aa).

A signal peptide spans 1–24 (MAGTVRTACLVVAMLLSLDFPGQA). Residue glutamine 25 is modified to Pyrrolidone carboxylic acid. Intrachain disulfides connect cysteine 35–cysteine 72, cysteine 65–cysteine 262, cysteine 73–cysteine 265, cysteine 197–cysteine 349, cysteine 252–cysteine 285, cysteine 274–cysteine 422, and cysteine 278–cysteine 410. Residues asparagine 124 and asparagine 241 are each glycosylated (N-linked (GlcNAc...) asparagine). Serine 352 is modified (phosphoserine). An N-linked (GlcNAc...) asparagine glycan is attached at asparagine 418. O-linked (Xyl...) (glycosaminoglycan) serine glycans are attached at residues serine 495 and serine 509. A lipid anchor (GPI-anchor amidated asparagine) is attached at asparagine 554. The propeptide at 555–580 (LGNVHSPLKLLTSMAISVVCFFFLVH) is removed in mature form.

This sequence belongs to the glypican family. In terms of assembly, heterodimer; disulfide-linked. Cleavage by a furin-like convertase results in production of alpha and beta chains which form a disulfide-linked heterodimer. Interacts with DPP4. Interacts with FGF2. Interacts with WNT5A. Also interacts with WNT3A and WNT7B. Interacts with hedgehog protein SHH; the heparan sulfate chains are not required for the interaction. Also interacts with hedgehog protein IHH. Interacts with CD81. Interacts with Wnt receptors FZD4, FZD7 and FZD8; the heparan sulfate chains are required for the interaction. Post-translationally, O-glycosylated; contains heparan sulfate and/or chondroitin sulfate. Cleaved intracellularly by a furin-like convertase to generate 2 subunits, alpha and beta, which remain associated through disulfide bonds and are associated with the cell surface via the GPI-anchor. This processing is essential for its role in inhibition of hedgehog signaling. A second proteolytic event may result in cleavage of the protein on the cell surface, separating it from the GPI-anchor and leading to its shedding from the cell surface.

Its subcellular location is the cell membrane. In terms of biological role, cell surface proteoglycan. Negatively regulates the hedgehog signaling pathway when attached via the GPI-anchor to the cell surface by competing with the hedgehog receptor PTC1 for binding to hedgehog proteins. Binding to the hedgehog protein SHH triggers internalization of the complex by endocytosis and its subsequent lysosomal degradation. Positively regulates the canonical Wnt signaling pathway by binding to the Wnt receptor Frizzled and stimulating the binding of the Frizzled receptor to Wnt ligands. Positively regulates the non-canonical Wnt signaling pathway. Binds to CD81 which decreases the availability of free CD81 for binding to the transcriptional repressor HHEX, resulting in nuclear translocation of HHEX and transcriptional repression. Inhibits the dipeptidyl peptidase activity of DPP4. Plays a role in limb patterning and skeletal development by controlling the cellular response to BMP4. Modulates the effects of growth factors BMP2, BMP7 and FGF7 on renal branching morphogenesis. Required for coronary vascular development. Plays a role in regulating cell movements during gastrulation. This is Glypican-3 (GPC3) from Pan troglodytes (Chimpanzee).